The following is a 40-amino-acid chain: MADTTGRIPLWLIGTVTGTLVIGLIGIFFYGSYSGLGSSL.

Residues 8-28 form a helical membrane-spanning segment; sequence IPLWLIGTVTGTLVIGLIGIF.

This sequence belongs to the PsbJ family. As to quaternary structure, PSII is composed of 1 copy each of membrane proteins PsbA, PsbB, PsbC, PsbD, PsbE, PsbF, PsbH, PsbI, PsbJ, PsbK, PsbL, PsbM, PsbT, PsbX, PsbY, PsbZ, Psb30/Ycf12, at least 3 peripheral proteins of the oxygen-evolving complex and a large number of cofactors. It forms dimeric complexes.

The protein resides in the plastid. It localises to the chloroplast thylakoid membrane. One of the components of the core complex of photosystem II (PSII). PSII is a light-driven water:plastoquinone oxidoreductase that uses light energy to abstract electrons from H(2)O, generating O(2) and a proton gradient subsequently used for ATP formation. It consists of a core antenna complex that captures photons, and an electron transfer chain that converts photonic excitation into a charge separation. This Cycas taitungensis (Prince sago) protein is Photosystem II reaction center protein J.